The following is a 592-amino-acid chain: Inactive heparanase-2 (592 aa).

The first 41 residues, 1–41 (MRVLCAFPEAMPSSNSRPPACLAPGALYLALLLHLSLSSQA), serve as a signal peptide directing secretion. Asn-254 and Asn-392 each carry an N-linked (GlcNAc...) asparagine glycan.

The protein belongs to the glycosyl hydrolase 79 family. As to quaternary structure, interacts with HPSE. Interacts with SDC1 (via glycan chains). As to expression, widely expressed, with the highest expression in brain, mammary gland, prostate, small intestine, testis and uterus. In the central nervous system, expressed in the spinal cord, caudate nucleus, thalamus, substantia nigra, medulla oblongata, putamen and pons. In the urinary bladder, expressed in longitudinal and circular layers of detrusor muscle. Found both in normal and cancer tissues.

The protein localises to the secreted. It is found in the extracellular space. The protein resides in the extracellular matrix. Functionally, binds heparin and heparan sulfate with high affinity, but lacks heparanase activity. Inhibits HPSE, possibly by competing for its substrates (in vitro). This is Inactive heparanase-2 (HPSE2) from Homo sapiens (Human).